Here is a 261-residue protein sequence, read N- to C-terminus: Transmembrane and immunoglobulin domain-containing protein 1 (261 aa).

Positions 1–26 are cleaved as a signal peptide; it reads MVWKITGPLQACQLLLVVLSLPQGRT. The 87-residue stretch at 27–113 folds into the Ig-like C2-type 1 domain; it reads SSVLTVNGRT…LQRDQTVSVT (87 aa). Topologically, residues 27 to 215 are extracellular; the sequence is SSVLTVNGRT…DFHLLVKDKV (189 aa). The cysteines at positions 53 and 102 are disulfide-linked. N-linked (GlcNAc...) asparagine glycosylation is found at N57, N82, N92, N117, N157, and N189. The Ig-like C2-type 2 domain occupies 121–206; sequence PPLLSGNGFQ…SSSLKMETMD (86 aa). C142 and C194 are oxidised to a cystine. A helical membrane pass occupies residues 216-236; that stretch reads FVMPAEPIIAACVVVVLTMAF. Topologically, residues 237 to 261 are cytoplasmic; it reads ALFSRRKRIMKLCGKKNDPNSETAL.

As to quaternary structure, homodimer. Post-translationally, N-glycosylated.

The protein localises to the cell membrane. It is found in the cytoplasm. Its function is as follows. May control cell-cell adhesion, cell migration and proliferation, cell morphology, and protects renal epithelial cells from oxidative cell injury to promote cell survival. In Mus musculus (Mouse), this protein is Transmembrane and immunoglobulin domain-containing protein 1.